The sequence spans 738 residues: 1,4-alpha-glucan branching enzyme GlgB (738 aa).

Aspartate 417 (nucleophile) is an active-site residue. The Proton donor role is filled by glutamate 472.

This sequence belongs to the glycosyl hydrolase 13 family. GlgB subfamily. In terms of assembly, monomer.

It carries out the reaction Transfers a segment of a (1-&gt;4)-alpha-D-glucan chain to a primary hydroxy group in a similar glucan chain.. It participates in glycan biosynthesis; glycogen biosynthesis. In terms of biological role, catalyzes the formation of the alpha-1,6-glucosidic linkages in glycogen by scission of a 1,4-alpha-linked oligosaccharide from growing alpha-1,4-glucan chains and the subsequent attachment of the oligosaccharide to the alpha-1,6 position. The protein is 1,4-alpha-glucan branching enzyme GlgB of Burkholderia pseudomallei (strain 1106a).